Consider the following 176-residue polypeptide: MPNSQAKKGLFQFYPHNLIWLGLSVLAIVLDQWTKWIASTHMNYADPVPVLPFLNWTLLHNYGAAFSFLSDAGGWQRYFFTSLAGLVSILFVFWLLRMPKKMVVLPVAIALILGGALGNLIDRITLGYVVDFIHVYYQNHHFPAFNIADSAITLGTILLLIDTFFLEKQRPKNSDA.

The next 4 membrane-spanning stretches (helical) occupy residues 10 to 30 (LFQF…AIVL), 48 to 68 (VPVL…AFSF), 78 to 98 (YFFT…LLRM), and 102 to 122 (MVVL…NLID). Residues D131 and D149 contribute to the active site. The helical transmembrane segment at 141–161 (HFPAFNIADSAITLGTILLLI) threads the bilayer.

Belongs to the peptidase A8 family.

The protein localises to the cell inner membrane. The enzyme catalyses Release of signal peptides from bacterial membrane prolipoproteins. Hydrolyzes -Xaa-Yaa-Zaa-|-(S,diacylglyceryl)Cys-, in which Xaa is hydrophobic (preferably Leu), and Yaa (Ala or Ser) and Zaa (Gly or Ala) have small, neutral side chains.. It functions in the pathway protein modification; lipoprotein biosynthesis (signal peptide cleavage). Its function is as follows. This protein specifically catalyzes the removal of signal peptides from prolipoproteins. This Acinetobacter baumannii (strain SDF) protein is Lipoprotein signal peptidase.